Reading from the N-terminus, the 101-residue chain is Urease subunit beta (101 aa).

Belongs to the urease beta subunit family. In terms of assembly, heterotrimer of UreA (gamma), UreB (beta) and UreC (alpha) subunits. Three heterotrimers associate to form the active enzyme.

It is found in the cytoplasm. The enzyme catalyses urea + 2 H2O + H(+) = hydrogencarbonate + 2 NH4(+). It functions in the pathway nitrogen metabolism; urea degradation; CO(2) and NH(3) from urea (urease route): step 1/1. This Rhodopseudomonas palustris (strain ATCC BAA-98 / CGA009) protein is Urease subunit beta.